The following is a 425-amino-acid chain: Enolase (425 aa).

Gln-162 lines the (2R)-2-phosphoglycerate pocket. Glu-204 serves as the catalytic Proton donor. 3 residues coordinate Mg(2+): Asp-241, Glu-284, and Asp-311. Positions 336, 365, 366, and 387 each coordinate (2R)-2-phosphoglycerate. Catalysis depends on Lys-336, which acts as the Proton acceptor.

It belongs to the enolase family. It depends on Mg(2+) as a cofactor.

It is found in the cytoplasm. The protein localises to the secreted. It localises to the cell surface. The enzyme catalyses (2R)-2-phosphoglycerate = phosphoenolpyruvate + H2O. The protein operates within carbohydrate degradation; glycolysis; pyruvate from D-glyceraldehyde 3-phosphate: step 4/5. Catalyzes the reversible conversion of 2-phosphoglycerate (2-PG) into phosphoenolpyruvate (PEP). It is essential for the degradation of carbohydrates via glycolysis. The chain is Enolase from Brucella abortus (strain S19).